Here is a 635-residue protein sequence, read N- to C-terminus: Cytoplasmic polyadenylation element-binding protein 4 (635 aa).

Disordered regions lie at residues 1–70 (MQDD…TLRL), 149–284 (GFGG…GFNT), and 337–369 (LFPM…PHQN). Positions 14-30 (PQLQQESQEGQDKQTLS) are enriched in polar residues. The segment covering 166–182 (PSPHPHFQHPHNQHRRS) has biased composition (basic residues). Residues 216–231 (GSYQSPSSTPSSTSWS) are compositionally biased toward low complexity. A compositionally biased stretch (gly residues) spans 232-241 (PGGGYGGWGS). The span at 254-283 (PLNSISPLKKSFPNNQTQTQKYPRNNSGFN) shows a compositional bias: polar residues. Basic and acidic residues predominate over residues 341–353 (EDERSYGEDERSD). 2 consecutive RRM domains span residues 378–469 (RKVF…PWNL) and 486–568 (KTIF…PYVL).

This sequence belongs to the RRM CPEB family.

The protein localises to the cytoplasm. It localises to the cell projection. It is found in the dendrite. Its subcellular location is the dendritic spine. The protein resides in the postsynaptic density. The protein localises to the axon. It localises to the growth cone. It is found in the endoplasmic reticulum. Its subcellular location is the perinuclear region. Its function is as follows. Sequence-specific RNA-binding protein that binds to the cytoplasmic polyadenylation element (CPE), an uridine-rich sequence element (consensus sequence 5'-UUUUUAU-3') within the mRNA 3'-UTR. RNA binding results in a clear conformational change analogous to the Venus fly trap mechanism. The protein is Cytoplasmic polyadenylation element-binding protein 4 (cpeb4) of Danio rerio (Zebrafish).